A 419-amino-acid chain; its full sequence is tRNA (guanine-N(7)-)-methyltransferase non-catalytic subunit wuho (419 aa).

The segment covering 51–61 (STAEQQSAAAE) has biased composition (low complexity). The disordered stretch occupies residues 51–75 (STAEQQSAAAETGGGSVVEGEEPKD). 3 WD repeats span residues 87–127 (APTV…AQLV), 174–213 (GHLSIVYDILWTGDQQHIITSDRDDKIRVTNYPATFDIHS), and 217–255 (GHKEFVSGLALLSDEHICSVSGDKTLRVWNFKAGKELLR).

Belongs to the WD repeat TRM82 family. Forms a heterodimer with the catalytic subunit Mettl1. Interacts with mei-P26 and weakly interacts with bgcn; required for the function or formation of the mei-P26-bgcn-bam-sxl complex. Interacts with nanos; may be involved in mei-P26-dependent derepression of the BMP signaling pathway. Interacts with Myc; the interaction may be mediated by mei-P26 and may be involved in the regulation of ribosome biogenesis. In terms of tissue distribution, in testis, it is present at high level in hub cells, a niche for germline stem cells of testis. Ubiquitously expressed in all testicular cells throughout spermatogenesis. Ubiquitously expressed in all germline and somatic cells of the ovary.

It localises to the nucleus. It is found in the cytoplasm. It functions in the pathway tRNA modification; N(7)-methylguanine-tRNA biosynthesis. Its function is as follows. Required for the Mettl1-dependent formation of N(7)-methylguanine at position 46 (m7G46) in tRNA. In the Mettl1-wuho methyltransferase complex, it is required to stabilize and induce conformational changes of the catalytic subunit. Required for binding of nanos mRNA and repression of translation by the mei-P26-bgcn-bam-sxl complex. May cooperate with mei-P26 and nanos to derepress the BMP signaling pathway. May cooperate with mei-P26 to suppress expression of a subset of microRNAs. May cooperate with mei-P26 to regulate bam expression levels in germline cells during gametogenesis. Required to promote mitosis to meiosis transition during gametogenesis. May regulate germline cell division in part by regulating ribosome biogenesis. This Drosophila willistoni (Fruit fly) protein is tRNA (guanine-N(7)-)-methyltransferase non-catalytic subunit wuho.